A 413-amino-acid polypeptide reads, in one-letter code: Eukaryotic initiation factor 4A-14 (413 aa).

The Q motif motif lies at 40–68; it reads DSFDAMGLQENLLRGIYAYGFEKPSAIQQ. Positions 71–241 constitute a Helicase ATP-binding domain; that stretch reads IVPFCKGLDV…RKFMSKPVRI (171 aa). 84 to 91 is an ATP binding site; it reads AQSGTGKT. The short motif at 189–192 is the DEAD box element; that stretch reads DEAD. The 162-residue stretch at 252–413 folds into the Helicase C-terminal domain; the sequence is GIKQFYVNVD…ELPANVADLL (162 aa).

Belongs to the DEAD box helicase family. eIF4A subfamily. As to quaternary structure, eIF4F is a multi-subunit complex, the composition of which varies with external and internal environmental conditions. It is composed of at least EIF4A, EIF4E and EIF4G.

It catalyses the reaction ATP + H2O = ADP + phosphate + H(+). Its function is as follows. ATP-dependent RNA helicase which is a subunit of the eIF4F complex involved in cap recognition and is required for mRNA binding to ribosome. In the current model of translation initiation, eIF4A unwinds RNA secondary structures in the 5'-UTR of mRNAs which is necessary to allow efficient binding of the small ribosomal subunit, and subsequent scanning for the initiator codon. The protein is Eukaryotic initiation factor 4A-14 of Nicotiana tabacum (Common tobacco).